Consider the following 323-residue polypeptide: PTS system mannose-specific EIIAB component (323 aa).

Residues 2–124 enclose the PTS EIIA type-4 domain; it reads TIAIVIGTHG…VALAVETGRE (123 aa). The active-site Tele-phosphohistidine intermediate; for EIIA activity is the His-10. His-10 carries the post-translational modification Phosphohistidine; by HPr. Lys-55 is subject to N6-acetyllysine. The tract at residues 137-155 is hinge; it reads AAPAPAAAAPKAAPTPAKP. The PTS EIIB type-4 domain occupies 157–320; the sequence is GPNDYMVIGL…KLKMMDLISK (164 aa). His-175 serves as the catalytic Pros-phosphohistidine intermediate; for EIIB activity. His-175 carries the phosphohistidine; by EIIA modification. Lys-234 bears the N6-acetyllysine mark.

As to quaternary structure, homodimer.

Its subcellular location is the cytoplasm. It localises to the cell inner membrane. It catalyses the reaction D-mannose(out) + N(pros)-phospho-L-histidyl-[protein] = D-mannose 6-phosphate(in) + L-histidyl-[protein]. The phosphoenolpyruvate-dependent sugar phosphotransferase system (sugar PTS), a major carbohydrate active transport system, catalyzes the phosphorylation of incoming sugar substrates concomitantly with their translocation across the cell membrane. The enzyme II ManXYZ PTS system is involved in mannose transport. In Escherichia coli O157:H7, this protein is PTS system mannose-specific EIIAB component (manX).